The following is a 370-amino-acid chain: Chorismate synthase (370 aa).

Arg48 provides a ligand contact to NADP(+). FMN contacts are provided by residues 125 to 127 (RSS), 241 to 242 (NA), Gly286, 301 to 305 (KPTSS), and Arg327.

It belongs to the chorismate synthase family. Homotetramer. FMNH2 is required as a cofactor.

The catalysed reaction is 5-O-(1-carboxyvinyl)-3-phosphoshikimate = chorismate + phosphate. It functions in the pathway metabolic intermediate biosynthesis; chorismate biosynthesis; chorismate from D-erythrose 4-phosphate and phosphoenolpyruvate: step 7/7. Catalyzes the anti-1,4-elimination of the C-3 phosphate and the C-6 proR hydrogen from 5-enolpyruvylshikimate-3-phosphate (EPSP) to yield chorismate, which is the branch point compound that serves as the starting substrate for the three terminal pathways of aromatic amino acid biosynthesis. This reaction introduces a second double bond into the aromatic ring system. The protein is Chorismate synthase of Ruegeria sp. (strain TM1040) (Silicibacter sp.).